A 355-amino-acid polypeptide reads, in one-letter code: Type II restriction enzyme CfrBI (355 aa).

It carries out the reaction Endonucleolytic cleavage of DNA to give specific double-stranded fragments with terminal 5'-phosphates.. In terms of biological role, a P subtype restriction enzyme that recognizes the double-stranded sequence 5'-CCWWGG-3' and cleaves after C-1. The protein is Type II restriction enzyme CfrBI of Citrobacter freundii.